A 361-amino-acid polypeptide reads, in one-letter code: Chorismate synthase (361 aa).

NADP(+) contacts are provided by Arg-48 and Arg-54. FMN-binding positions include 125–127 (RSS), 238–239 (NA), Gly-278, 293–297 (KPTSS), and Arg-319.

This sequence belongs to the chorismate synthase family. In terms of assembly, homotetramer. Requires FMNH2 as cofactor.

The catalysed reaction is 5-O-(1-carboxyvinyl)-3-phosphoshikimate = chorismate + phosphate. Its pathway is metabolic intermediate biosynthesis; chorismate biosynthesis; chorismate from D-erythrose 4-phosphate and phosphoenolpyruvate: step 7/7. Functionally, catalyzes the anti-1,4-elimination of the C-3 phosphate and the C-6 proR hydrogen from 5-enolpyruvylshikimate-3-phosphate (EPSP) to yield chorismate, which is the branch point compound that serves as the starting substrate for the three terminal pathways of aromatic amino acid biosynthesis. This reaction introduces a second double bond into the aromatic ring system. The sequence is that of Chorismate synthase from Cronobacter sakazakii (strain ATCC BAA-894) (Enterobacter sakazakii).